Reading from the N-terminus, the 123-residue chain is UPF0102 protein Fjoh_1217 (123 aa).

Belongs to the UPF0102 family.

The chain is UPF0102 protein Fjoh_1217 from Flavobacterium johnsoniae (strain ATCC 17061 / DSM 2064 / JCM 8514 / BCRC 14874 / CCUG 350202 / NBRC 14942 / NCIMB 11054 / UW101) (Cytophaga johnsonae).